Here is an 86-residue protein sequence, read N- to C-terminus: HssA/B-like protein 60 (86 aa).

The tract at residues 11-33 is disordered; sequence GNIKSSSKSNIASSSSSSSSQSL.

This sequence belongs to the hssA/B family.

This chain is HssA/B-like protein 60 (hssl60), found in Dictyostelium discoideum (Social amoeba).